The sequence spans 323 residues: 1D-myo-inositol 2-acetamido-2-deoxy-alpha-D-glucopyranoside deacetylase 1 (323 aa).

Zn(2+) is bound by residues His-30, Asp-33, and His-165.

The protein belongs to the MshB deacetylase family. The cofactor is Zn(2+).

It carries out the reaction 1D-myo-inositol 2-acetamido-2-deoxy-alpha-D-glucopyranoside + H2O = 1D-myo-inositol 2-amino-2-deoxy-alpha-D-glucopyranoside + acetate. In terms of biological role, catalyzes the deacetylation of 1D-myo-inositol 2-acetamido-2-deoxy-alpha-D-glucopyranoside (GlcNAc-Ins) in the mycothiol biosynthesis pathway. This Catenulispora acidiphila (strain DSM 44928 / JCM 14897 / NBRC 102108 / NRRL B-24433 / ID139908) protein is 1D-myo-inositol 2-acetamido-2-deoxy-alpha-D-glucopyranoside deacetylase 1.